A 491-amino-acid polypeptide reads, in one-letter code: Delayed-rectifier potassium channel regulatory subunit KCNS3 (491 aa).

The Cytoplasmic segment spans residues 1–182 (MVFGEFFHRP…IRMENPAYCL (182 aa)). A helical membrane pass occupies residues 183–204 (SAKLIAISSLSVVLASIVAMCV). At 205-220 (HSMSEFQNEDGEVDDP) the chain is on the extracellular side. A helical transmembrane segment spans residues 221–243 (VLEGVEIACIAWFTGELAIRLVA). Residues 244–254 (APSQKKFWKNP) lie on the Cytoplasmic side of the membrane. Residues 255–275 (LNIIDFVSIIPFYATLAVDTK) form a helical membrane-spanning segment. At 276-285 (EEESEDIENM) the chain is on the extracellular side. A helical; Voltage-sensor transmembrane segment spans residues 286-306 (GKVVQILRLMRIFRILKLARH). Over 307–321 (SVGLRSLGATLRHSY) the chain is Cytoplasmic. The chain crosses the membrane as a helical span at residues 322 to 343 (HEVGLLLLFLSVGISIFSVLIY). The Extracellular segment spans residues 344 to 357 (SVEKDEHKSSLTSI). Positions 358–369 (PICWWWATISMT) form an intramembrane region, helical. The short motif at 370 to 375 (TVGYGD) is the Selectivity filter element. The stretch at 370 to 377 (TVGYGDTH) is an intramembrane region. The Extracellular portion of the chain corresponds to 378 to 384 (PVTLAGK). Residues 385-413 (IIASTCIICGILVVALPITIIFNKFSKYY) traverse the membrane as a helical segment. At 414 to 491 (QKQKDMEVDQ…TASLENCTGK (78 aa)) the chain is on the cytoplasmic side.

The protein belongs to the potassium channel family. S (TC 1.A.1.2) subfamily. Kv9.3/KCNS3 sub-subfamily. In terms of assembly, heterotetramer with KCNB1. Does not form homomultimers.

Its subcellular location is the cell membrane. In terms of biological role, potassium channel regulatory subunit that modulates the delayed rectifier potassium channel activity of KCNB1 by namely slowing down the deactivation and inactivation time constants. While it does not form functional channel on its own, it can form functional heterotetrameric channels with KCNB1. The sequence is that of Delayed-rectifier potassium channel regulatory subunit KCNS3 from Mus musculus (Mouse).